A 182-amino-acid polypeptide reads, in one-letter code: Helofensin-3 (182 aa).

The first 26 residues, Met-1 to Gly-26, serve as a signal peptide directing secretion. A C(6)C(4)C(9)C(6)CC 1; approximate repeat occupies Ala-27–Ala-64. One copy of the C(6)C(4)C(9)C(6)CC 2; approximate repeat lies at Arg-65 to Gln-101. One copy of the C(6)C(4)C(9)C(6)CC 3; approximate repeat lies at Arg-102–Lys-138. Residues Arg-139–Lys-176 form a C(6)C(4)C(9)C(6)CC 4; approximate repeat.

The protein belongs to the beta-defensin family. Helofensin subfamily. Expressed by the mandibular venom gland.

The protein localises to the secreted. Lethal toxin which possesses an inhibitory effect on direct electrical stimulation of the isolated hemi-diaphragm of mice. Neither hemorrhagic nor hemolytic activities are detected. Phospholipase A2 activity, proteolytic activity and arginine esterolytic activity are absent. In Heloderma suspectum cinctum (Banded Gila monster), this protein is Helofensin-3.